The following is a 151-amino-acid chain: Putative pre-16S rRNA nuclease (151 aa).

The protein belongs to the YqgF nuclease family.

Its subcellular location is the cytoplasm. Functionally, could be a nuclease involved in processing of the 5'-end of pre-16S rRNA. This is Putative pre-16S rRNA nuclease from Neisseria gonorrhoeae (strain ATCC 700825 / FA 1090).